Reading from the N-terminus, the 216-residue chain is uncharacterized protein (216 aa).

A helical membrane pass occupies residues I7–I29.

Its subcellular location is the membrane. This is an uncharacterized protein from Archaeoglobus fulgidus (strain ATCC 49558 / DSM 4304 / JCM 9628 / NBRC 100126 / VC-16).